The sequence spans 140 residues: Gastrula zinc finger protein XlCGF49.1 (140 aa).

5 C2H2-type zinc fingers span residues 6–28 (FTCM…YKIH), 34–56 (FTCM…YKMH), 62–84 (FSCS…QKIH), 90–112 (YACT…WKIH), and 118–140 (FSCT…QKMH).

Belongs to the krueppel C2H2-type zinc-finger protein family.

The protein localises to the nucleus. Its function is as follows. May be involved in transcriptional regulation. This chain is Gastrula zinc finger protein XlCGF49.1, found in Xenopus laevis (African clawed frog).